We begin with the raw amino-acid sequence, 132 residues long: Small ribosomal subunit protein uS11 (132 aa).

The protein belongs to the universal ribosomal protein uS11 family. As to quaternary structure, part of the 30S ribosomal subunit.

Located on the platform of the 30S subunit. The polypeptide is Small ribosomal subunit protein uS11 (Thermoplasma volcanium (strain ATCC 51530 / DSM 4299 / JCM 9571 / NBRC 15438 / GSS1)).